Here is a 372-residue protein sequence, read N- to C-terminus: tRNA-specific 2-thiouridylase MnmA (372 aa).

ATP-binding positions include 16-23 (GMSGGVDS) and methionine 42. The segment at 102 to 104 (NPD) is interaction with target base in tRNA. Cysteine 107 (nucleophile) is an active-site residue. A disulfide bridge connects residues cysteine 107 and cysteine 205. Glycine 132 serves as a coordination point for ATP. The segment at 155-157 (KDQ) is interaction with tRNA. Cysteine 205 functions as the Cysteine persulfide intermediate in the catalytic mechanism. Positions 317–318 (RY) are interaction with tRNA.

The protein belongs to the MnmA/TRMU family.

The protein localises to the cytoplasm. It catalyses the reaction S-sulfanyl-L-cysteinyl-[protein] + uridine(34) in tRNA + AH2 + ATP = 2-thiouridine(34) in tRNA + L-cysteinyl-[protein] + A + AMP + diphosphate + H(+). Functionally, catalyzes the 2-thiolation of uridine at the wobble position (U34) of tRNA, leading to the formation of s(2)U34. The sequence is that of tRNA-specific 2-thiouridylase MnmA from Shewanella sp. (strain ANA-3).